We begin with the raw amino-acid sequence, 310 residues long: N-acetyl-gamma-glutamyl-phosphate reductase (310 aa).

Residue C117 is part of the active site.

Belongs to the NAGSA dehydrogenase family. Type 2 subfamily.

Its subcellular location is the cytoplasm. It catalyses the reaction N-acetyl-L-glutamate 5-semialdehyde + phosphate + NADP(+) = N-acetyl-L-glutamyl 5-phosphate + NADPH + H(+). It functions in the pathway amino-acid biosynthesis; L-arginine biosynthesis; N(2)-acetyl-L-ornithine from L-glutamate: step 3/4. In terms of biological role, catalyzes the NADPH-dependent reduction of N-acetyl-5-glutamyl phosphate to yield N-acetyl-L-glutamate 5-semialdehyde. The sequence is that of N-acetyl-gamma-glutamyl-phosphate reductase from Rhizobium johnstonii (strain DSM 114642 / LMG 32736 / 3841) (Rhizobium leguminosarum bv. viciae).